Here is a 375-residue protein sequence, read N- to C-terminus: Growth/differentiation factor 8 (375 aa).

A signal peptide spans Met1 to Ala18. A propeptide spanning residues Gly19–Arg266 is cleaved from the precursor. N-linked (GlcNAc...) asparagine glycosylation is found at Asn47 and Asn71. Cystine bridges form between Cys272–Cys282, Cys281–Cys340, Cys309–Cys372, and Cys313–Cys374.

The protein belongs to the TGF-beta family. In terms of assembly, homodimer; disulfide-linked. Interacts with WFIKKN2, leading to inhibit its activity. Interacts with FSTL3. Post-translationally, synthesized as large precursor molecule that undergoes proteolytic cleavage to generate an N-terminal propeptide and a disulfide linked C-terminal dimer, which is the biologically active molecule. The circulating form consists of a latent complex of the C-terminal dimer and other proteins, including its propeptide, which maintain the C-terminal dimer in a latent, inactive state. Ligand activation requires additional cleavage of the prodomain by a tolloid-like metalloproteinase.

The protein localises to the secreted. Functionally, acts specifically as a negative regulator of skeletal muscle growth. This chain is Growth/differentiation factor 8 (MSTN), found in Taurotragus derbianus (Giant eland).